The chain runs to 295 residues: Ethanolamine ammonia-lyase small subunit (295 aa).

Positions 207, 228, and 258 each coordinate adenosylcob(III)alamin.

It belongs to the EutC family. As to quaternary structure, the basic unit is a heterodimer which dimerizes to form tetramers. The heterotetramers trimerize; 6 large subunits form a core ring with 6 small subunits projecting outwards. Adenosylcob(III)alamin serves as cofactor.

The protein localises to the bacterial microcompartment. It carries out the reaction ethanolamine = acetaldehyde + NH4(+). Its pathway is amine and polyamine degradation; ethanolamine degradation. In terms of biological role, catalyzes the deamination of various vicinal amino-alcohols to oxo compounds. Allows this organism to utilize ethanolamine as the sole source of nitrogen and carbon in the presence of external vitamin B12. This Escherichia coli (strain SE11) protein is Ethanolamine ammonia-lyase small subunit.